The chain runs to 353 residues: Pupal cuticle protein PCP52 (353 aa).

Positions 1–15 (MRVLILSAFIACATA) are cleaved as a signal peptide. Residues 166 to 195 (AEAPEGNKDEGNKDSVQVESSATESESDKA) are disordered. Residues 179 to 189 (DSVQVESSATE) show a composition bias toward polar residues.

Its function is as follows. Component of the cuticle of the pupa of Galleria mellonella. The polypeptide is Pupal cuticle protein PCP52 (PCP52) (Galleria mellonella (Greater wax moth)).